Reading from the N-terminus, the 307-residue chain is MSSEAGNPHPGFKMEYLSGSIAPDAGYTISVDWGKKFHGEDVNKAIKIANTMLSLAKGTDEKAFAKGWLAHLMQDRVAHGNGQGLPNDRTYGVGYSNYAAQKYGIDHITAEFYVNGRVIHEKGWNWDFVRIAIPTKLIAKAMKSLYGSSPSESDLSNAYNKFAAEYYAELTFWNSPAGNTLYLSLYLTGVVADYDDYVQEVNCNPYEKSIELTRSPNAMSATFSPLVAKDAKGTNVQIKKWVKEYATMLEKSGAIKVSRKFENGWLVIEFKMTDKAKADKIAEQVLRNMVKSGELPENTAKILSRMF.

This is an uncharacterized protein from Archaeoglobus fulgidus (strain ATCC 49558 / DSM 4304 / JCM 9628 / NBRC 100126 / VC-16).